A 457-amino-acid chain; its full sequence is Bifunctional protein GlmU (457 aa).

The tract at residues 1–230 (MPLSLPLHIV…PREVEGVNDL (230 aa)) is pyrophosphorylase. UDP-N-acetyl-alpha-D-glucosamine contacts are provided by residues 12-15 (LAAG), Lys-26, Gln-78, 83-84 (GT), 105-107 (YGD), Gly-140, Glu-155, Asn-170, and Asn-228. Asp-107 is a Mg(2+) binding site. Residue Asn-228 participates in Mg(2+) binding. The tract at residues 231–251 (WQLTQLERTWQIRAARALCLQ) is linker. The interval 252 to 457 (GARVADPARL…DGWQRPKKKT (206 aa)) is N-acetyltransferase. 2 residues coordinate UDP-N-acetyl-alpha-D-glucosamine: Arg-334 and Lys-352. His-364 acts as the Proton acceptor in catalysis. 2 residues coordinate UDP-N-acetyl-alpha-D-glucosamine: Tyr-367 and Asn-378. Residues Ala-381, 387–388 (NY), Ser-406, Ala-424, and Arg-441 contribute to the acetyl-CoA site.

The protein in the N-terminal section; belongs to the N-acetylglucosamine-1-phosphate uridyltransferase family. This sequence in the C-terminal section; belongs to the transferase hexapeptide repeat family. In terms of assembly, homotrimer. It depends on Mg(2+) as a cofactor.

The protein resides in the cytoplasm. The catalysed reaction is alpha-D-glucosamine 1-phosphate + acetyl-CoA = N-acetyl-alpha-D-glucosamine 1-phosphate + CoA + H(+). The enzyme catalyses N-acetyl-alpha-D-glucosamine 1-phosphate + UTP + H(+) = UDP-N-acetyl-alpha-D-glucosamine + diphosphate. The protein operates within nucleotide-sugar biosynthesis; UDP-N-acetyl-alpha-D-glucosamine biosynthesis; N-acetyl-alpha-D-glucosamine 1-phosphate from alpha-D-glucosamine 6-phosphate (route II): step 2/2. Its pathway is nucleotide-sugar biosynthesis; UDP-N-acetyl-alpha-D-glucosamine biosynthesis; UDP-N-acetyl-alpha-D-glucosamine from N-acetyl-alpha-D-glucosamine 1-phosphate: step 1/1. It participates in bacterial outer membrane biogenesis; LPS lipid A biosynthesis. Catalyzes the last two sequential reactions in the de novo biosynthetic pathway for UDP-N-acetylglucosamine (UDP-GlcNAc). The C-terminal domain catalyzes the transfer of acetyl group from acetyl coenzyme A to glucosamine-1-phosphate (GlcN-1-P) to produce N-acetylglucosamine-1-phosphate (GlcNAc-1-P), which is converted into UDP-GlcNAc by the transfer of uridine 5-monophosphate (from uridine 5-triphosphate), a reaction catalyzed by the N-terminal domain. The polypeptide is Bifunctional protein GlmU (Xylella fastidiosa (strain M12)).